A 749-amino-acid polypeptide reads, in one-letter code: Protein SEY1 homolog 2 (749 aa).

Residues 1 to 671 are Cytoplasmic-facing; sequence MIKNYGDRYH…QKHKQDFLQN (671 aa). Positions 40 to 265 constitute a GB1/RHD3-type G domain; it reads GKNYNIVSII…YEKNVRWSDM (226 aa). 50–57 contributes to the GTP binding site; the sequence is GSQSTGKS. A coiled-coil region spans residues 445-465; the sequence is NQLKAFVEAQLATFKQQLDNI. The helical transmembrane segment at 672–692 threads the bilayer; it reads IPKPFWFLLLFFMYDDVLRWM. The Lumenal portion of the chain corresponds to 693 to 695; that stretch reads GNP. The helical transmembrane segment at 696 to 716 threads the bilayer; that stretch reads LFLYPILIILCFVGFCIAIGL. Over 717 to 749 the chain is Cytoplasmic; the sequence is HSLPKLAFQWVFRTLNQAVIPIIFGGISKLKGS.

It belongs to the TRAFAC class dynamin-like GTPase superfamily. GB1/RHD3 GTPase family. RHD3 subfamily.

Its subcellular location is the endoplasmic reticulum membrane. In terms of biological role, probable GTP-binding protein that may be involved in cell development. In Paramecium tetraurelia, this protein is Protein SEY1 homolog 2.